The chain runs to 118 residues: Large ribosomal subunit protein uL18 (118 aa).

It belongs to the universal ribosomal protein uL18 family. In terms of assembly, part of the 50S ribosomal subunit; part of the 5S rRNA/L5/L18/L25 subcomplex. Contacts the 5S and 23S rRNAs.

Its function is as follows. This is one of the proteins that bind and probably mediate the attachment of the 5S RNA into the large ribosomal subunit, where it forms part of the central protuberance. The sequence is that of Large ribosomal subunit protein uL18 from Campylobacter hominis (strain ATCC BAA-381 / DSM 21671 / CCUG 45161 / LMG 19568 / NCTC 13146 / CH001A).